The chain runs to 226 residues: DELTA-thalatoxin-Avl1b (226 aa).

The first 21 residues, 1–21, serve as a signal peptide directing secretion; the sequence is MRHFVVFLYMFLALSIPTAFA. The propeptide occupies 22–45; sequence KKHIVTKKGNHQDITNDNEGENAE. Residues 50–59 form a plays an important role in the hemolytic activity region; sequence AVAGAVIAGG. An N-terminal region region spans residues 58–77; it reads GGELALKILTKILDEIGKID. Residues S101, V134, S152, P154, Y180, and Y184 each coordinate phosphocholine. Residues 152-167 form a trp-rich region, which is important for the binding to lipid membrane region; that stretch reads SVPFDYNLYTNWWNVK. The short motif at 191–193 is the Cell attachment site, crucial for protein stability element; the sequence is KPS.

It belongs to the actinoporin family. Sea anemone subfamily. Octamer or nonamer in membranes. Monomer in the soluble state.

It is found in the secreted. The protein resides in the nematocyst. The protein localises to the target cell membrane. Its function is as follows. Pore-forming protein that forms cations-selective hydrophilic pores of around 1 nm and causes cytolysis. Pore formation is a multi-step process that involves specific recognition of membrane sphingomyelin (but neither cholesterol nor phosphatidylcholine) using aromatic rich region and adjacent phosphocholine (POC) binding site, firm binding to the membrane (mainly driven by hydrophobic interactions) accompanied by the transfer of the N-terminal region to the lipid-water interface and finally pore formation after oligomerization of monomers. This Actineria villosa (Okinawan sea anemone) protein is DELTA-thalatoxin-Avl1b.